We begin with the raw amino-acid sequence, 204 residues long: ATP phosphoribosyltransferase (204 aa).

It belongs to the ATP phosphoribosyltransferase family. Short subfamily. As to quaternary structure, heteromultimer composed of HisG and HisZ subunits.

Its subcellular location is the cytoplasm. The enzyme catalyses 1-(5-phospho-beta-D-ribosyl)-ATP + diphosphate = 5-phospho-alpha-D-ribose 1-diphosphate + ATP. It functions in the pathway amino-acid biosynthesis; L-histidine biosynthesis; L-histidine from 5-phospho-alpha-D-ribose 1-diphosphate: step 1/9. Functionally, catalyzes the condensation of ATP and 5-phosphoribose 1-diphosphate to form N'-(5'-phosphoribosyl)-ATP (PR-ATP). Has a crucial role in the pathway because the rate of histidine biosynthesis seems to be controlled primarily by regulation of HisG enzymatic activity. The protein is ATP phosphoribosyltransferase of Staphylococcus aureus (strain MRSA252).